Consider the following 145-residue polypeptide: MSSFSTQTPYPNLAVPFFTSIPNGLYPSKSIVISGVVLSDAKRFQINLRCGGDIAFHLNPRFDENAVVRNTQINNSWGPEERSLPGSMPFSRGQRFSVWILCEGHCFKVAVDGQHICEYSHRLMNLPDINTLEVAGDIQLTHVET.

Ser-2 carries the post-translational modification N-acetylserine. The Galectin domain maps to 17–145 (FFTSIPNGLY…GDIQLTHVET (129 aa)). 77–83 (WGPEERS) serves as a coordination point for a beta-D-galactoside.

Monomer. As to expression, erythrocytes.

Its function is as follows. May function in erythrocyte differentiation. This Rattus norvegicus (Rat) protein is Galectin-5 (Lgals5).